Here is a 94-residue protein sequence, read N- to C-terminus: U27-theraphotoxin-Cg1a (94 aa).

Positions 1 to 22 (MIFLLPPVIFVMLLAESVLILG) are cleaved as a signal peptide. Positions 23–58 (DSEDADLMEMVQMSRPFFNPIIPAVEFVDLREERQR) are excised as a propeptide. Intrachain disulfides connect C60/C78, C67/C83, and C77/C88.

It belongs to the neurotoxin 14 (magi-1) family. OAIP-1 subfamily. In terms of tissue distribution, expressed by the venom gland.

The protein resides in the secreted. Functionally, probable ion channel inhibitor. The sequence is that of U27-theraphotoxin-Cg1a from Chilobrachys guangxiensis (Chinese earth tiger tarantula).